The following is a 214-amino-acid chain: 3,4-dihydroxy-2-butanone 4-phosphate synthase (214 aa).

Residues 37-38, Asp-42, 150-154, and Glu-174 contribute to the D-ribulose 5-phosphate site; these read RE and RPGHT. A Mg(2+)-binding site is contributed by Glu-38. Residue His-153 coordinates Mg(2+).

It belongs to the DHBP synthase family. As to quaternary structure, homodimer. It depends on Mg(2+) as a cofactor. The cofactor is Mn(2+).

It catalyses the reaction D-ribulose 5-phosphate = (2S)-2-hydroxy-3-oxobutyl phosphate + formate + H(+). The protein operates within cofactor biosynthesis; riboflavin biosynthesis; 2-hydroxy-3-oxobutyl phosphate from D-ribulose 5-phosphate: step 1/1. Catalyzes the conversion of D-ribulose 5-phosphate to formate and 3,4-dihydroxy-2-butanone 4-phosphate. The polypeptide is 3,4-dihydroxy-2-butanone 4-phosphate synthase (Mannheimia succiniciproducens (strain KCTC 0769BP / MBEL55E)).